Reading from the N-terminus, the 278-residue chain is Energy-coupling factor transporter ATP-binding protein EcfA (278 aa).

Residues 4–239 (LETRDLKYSY…SETVRSANLR (236 aa)) enclose the ABC transporter domain. Position 37 to 44 (37 to 44 (GPNGAGKS)) interacts with ATP.

Belongs to the ABC transporter superfamily. Energy-coupling factor EcfA family. Forms a stable energy-coupling factor (ECF) transporter complex composed of 2 membrane-embedded substrate-binding proteins (S component), 2 ATP-binding proteins (A component) and 2 transmembrane proteins (T component).

It localises to the cell membrane. Its function is as follows. ATP-binding (A) component of a common energy-coupling factor (ECF) ABC-transporter complex. Unlike classic ABC transporters this ECF transporter provides the energy necessary to transport a number of different substrates. This chain is Energy-coupling factor transporter ATP-binding protein EcfA, found in Methanococcus maripaludis (strain DSM 14266 / JCM 13030 / NBRC 101832 / S2 / LL).